The chain runs to 201 residues: Proteasome subunit beta 1 (201 aa).

A propeptide (removed in mature form; by autocatalysis) is located at residue Met1. The active-site Nucleophile is Thr2.

It belongs to the peptidase T1B family. The 20S proteasome core is composed of 14 alpha and 14 beta subunits that assemble into four stacked heptameric rings, resulting in a barrel-shaped structure. The two inner rings, each composed of seven catalytic beta subunits, are sandwiched by two outer rings, each composed of seven alpha subunits. The catalytic chamber with the active sites is on the inside of the barrel. Has a gated structure, the ends of the cylinder being occluded by the N-termini of the alpha-subunits. Is capped at one or both ends by the proteasome regulatory ATPase, PAN.

It is found in the cytoplasm. The enzyme catalyses Cleavage of peptide bonds with very broad specificity.. Its activity is regulated as follows. The formation of the proteasomal ATPase PAN-20S proteasome complex, via the docking of the C-termini of PAN into the intersubunit pockets in the alpha-rings, triggers opening of the gate for substrate entry. Interconversion between the open-gate and close-gate conformations leads to a dynamic regulation of the 20S proteasome proteolysis activity. Its function is as follows. Component of the proteasome core, a large protease complex with broad specificity involved in protein degradation. The chain is Proteasome subunit beta 1 from Pyrobaculum calidifontis (strain DSM 21063 / JCM 11548 / VA1).